The sequence spans 238 residues: CD63 antigen (238 aa).

The Cytoplasmic portion of the chain corresponds to 1–11 (MAVEGGMKCVK). A helical transmembrane segment spans residues 12-32 (FLLYVLLLAFCACAVGLIAIG). Topologically, residues 33-51 (VAVQVVLKQAITHETTAGS) are extracellular. Residues 52–72 (LLPVVIIAVGAFLFLVAFVGC) traverse the membrane as a helical segment. Residues 73–81 (CGACKENYC) are Cytoplasmic-facing. A helical transmembrane segment spans residues 82–102 (LMITFAIFLSLIMLVEVAVAI). The Extracellular portion of the chain corresponds to 103–203 (AGYVFRDQVK…TIAIWLRKNI (101 aa)). Residues N116, N130, N150, and N172 are each glycosylated (N-linked (GlcNAc...) asparagine). The helical transmembrane segment at 204–224 (LLVAAAALGIAFVEVLGIIFS) threads the bilayer. Topologically, residues 225 to 238 (CCLVKSIRSGYEVM) are cytoplasmic. Positions 234-238 (GYEVM) match the Lysosomal targeting motif motif.

It belongs to the tetraspanin (TM4SF) family. Interacts with TIMP1 and ITGB1 and recruits TIMP1 to ITGB1. Interacts with CD9. Identified in a complex with CD9 and ITGB3. Interacts with PMEL. Interacts with KDR/VEGFR2; identified in a complex with ITGB1 and KDR/VEGFR2 and is required to recruit KDR to ITGB1 complexes. Interacts with SYT7. Post-translationally, palmitoylated at a low, basal level in unstimulated platelets. The level of palmitoylation increases when platelets are activated by thrombin (in vitro). Ubiquitous. Strongly expressed in kidney. Detected in spleen, bone marrow, peripheral blood mononuclear cells and macrophages.

It is found in the cell membrane. The protein resides in the lysosome membrane. Its subcellular location is the late endosome membrane. It localises to the endosome. The protein localises to the multivesicular body. It is found in the melanosome. The protein resides in the secreted. Its subcellular location is the extracellular exosome. It localises to the cell surface. In terms of biological role, functions as a cell surface receptor for TIMP1 and plays a role in the activation of cellular signaling cascades. Plays a role in the activation of ITGB1 and integrin signaling, leading to the activation of AKT, FAK/PTK2 and MAP kinases. Promotes cell survival, reorganization of the actin cytoskeleton, cell adhesion, spreading and migration, via its role in the activation of AKT and FAK/PTK2. Plays a role in VEGFA signaling via its role in regulating the internalization of KDR/VEGFR2. Plays a role in intracellular vesicular transport processes, and is required for normal trafficking of the PMEL luminal domain that is essential for the development and maturation of melanocytes. Plays a role in the adhesion of leukocytes onto endothelial cells via its role in the regulation of SELP trafficking. May play a role in mast cell degranulation in response to Ms4a2/FceRI stimulation, but not in mast cell degranulation in response to other stimuli. The chain is CD63 antigen (Cd63) from Mus musculus (Mouse).